A 248-amino-acid polypeptide reads, in one-letter code: Triosephosphate isomerase (248 aa).

Substrate contacts are provided by Asn-10 and Lys-12. The active-site Electrophile is the His-95. The Proton acceptor role is filled by Glu-165.

This sequence belongs to the triosephosphate isomerase family. Homodimer.

It catalyses the reaction D-glyceraldehyde 3-phosphate = dihydroxyacetone phosphate. It participates in carbohydrate biosynthesis; gluconeogenesis. It functions in the pathway carbohydrate degradation; glycolysis; D-glyceraldehyde 3-phosphate from glycerone phosphate: step 1/1. This chain is Triosephosphate isomerase (TPI1), found in Kluyveromyces lactis (strain ATCC 8585 / CBS 2359 / DSM 70799 / NBRC 1267 / NRRL Y-1140 / WM37) (Yeast).